The primary structure comprises 267 residues: Phosphoinositide-3-kinase-interacting protein 1 (267 aa).

The N-terminal stretch at Met1–Gly21 is a signal peptide. Topologically, residues Ser22 to Thr172 are extracellular. The Kringle domain maps to Gly24–Cys101. 3 disulfide bridges follow: Cys25/Cys101, Cys46/Cys82, and Cys70/Cys96. The segment covering Pro91 to Cys101 has biased composition (basic and acidic residues). Positions Pro91–Glu122 are disordered. Residues Leu173–Val193 traverse the membrane as a helical segment. At Leu194–Ala267 the chain is on the cytoplasmic side.

The protein localises to the cell membrane. In terms of biological role, negative regulator of hepatic phosphatidylinositol 3-kinase (PI3K) activity. The chain is Phosphoinositide-3-kinase-interacting protein 1 (Pik3ip1) from Rattus norvegicus (Rat).